A 144-amino-acid chain; its full sequence is Transcription antitermination protein NusB (144 aa).

Belongs to the NusB family.

Involved in transcription antitermination. Required for transcription of ribosomal RNA (rRNA) genes. Binds specifically to the boxA antiterminator sequence of the ribosomal RNA (rrn) operons. The chain is Transcription antitermination protein NusB from Leifsonia xyli subsp. xyli (strain CTCB07).